We begin with the raw amino-acid sequence, 577 residues long: Endopolyphosphatase (577 aa).

At 1-2 (MR) the chain is on the cytoplasmic side. Residues 3–23 (PSVITVAVLFVQSTWASFAFG) form a helical; Signal-anchor for type II membrane protein membrane-spanning segment. Residues 24-577 (NPMSMRNKAH…YIGSISDFED (554 aa)) are Vacuolar-facing. N-linked (GlcNAc...) asparagine glycans are attached at residues N363, N370, N375, and N399. Residues 430 to 460 (SDYEIDKKKKKKKKNNKKKKKNKRKNIKPGP) are disordered. Residues 437-456 (KKKKKKKNNKKKKKNKRKNI) are compositionally biased toward basic residues. The N-linked (GlcNAc...) asparagine glycan is linked to N481.

It belongs to the endopolyphosphatase PPN1 family. Requires a divalent metal cation as cofactor. In terms of processing, processing by proteases in the vacuole may be required for activation.

It localises to the vacuole membrane. It catalyses the reaction [phosphate](n+1) + n H2O = (n+1) phosphate + n H(+). Catalyzes the hydrolysis of inorganic polyphosphate (polyP) chains of many hundreds of phosphate residues into shorter lengths. This Schizosaccharomyces pombe (strain 972 / ATCC 24843) (Fission yeast) protein is Endopolyphosphatase (ppn1).